Consider the following 340-residue polypeptide: Phenylalanine--tRNA ligase alpha subunit (340 aa).

Residue E258 coordinates Mg(2+).

It belongs to the class-II aminoacyl-tRNA synthetase family. Phe-tRNA synthetase alpha subunit type 1 subfamily. As to quaternary structure, tetramer of two alpha and two beta subunits. Requires Mg(2+) as cofactor.

The protein localises to the cytoplasm. The enzyme catalyses tRNA(Phe) + L-phenylalanine + ATP = L-phenylalanyl-tRNA(Phe) + AMP + diphosphate + H(+). The polypeptide is Phenylalanine--tRNA ligase alpha subunit (Corynebacterium glutamicum (strain ATCC 13032 / DSM 20300 / JCM 1318 / BCRC 11384 / CCUG 27702 / LMG 3730 / NBRC 12168 / NCIMB 10025 / NRRL B-2784 / 534)).